The chain runs to 110 residues: Large ribosomal subunit protein uL24 (110 aa).

This sequence belongs to the universal ribosomal protein uL24 family. In terms of assembly, part of the 50S ribosomal subunit.

In terms of biological role, one of two assembly initiator proteins, it binds directly to the 5'-end of the 23S rRNA, where it nucleates assembly of the 50S subunit. Its function is as follows. One of the proteins that surrounds the polypeptide exit tunnel on the outside of the subunit. In Caldicellulosiruptor saccharolyticus (strain ATCC 43494 / DSM 8903 / Tp8T 6331), this protein is Large ribosomal subunit protein uL24.